Here is a 172-residue protein sequence, read N- to C-terminus: Neuropeptide-like protein nlp-8 (172 aa).

An N-terminal signal peptide occupies residues 1–26 (MSQKLLPISPLQLLFLQCLLIGFTAA).

Post-translationally, may be processed by convertase egl-3.

It is found in the secreted. Neuropeptide-like protein. Plays a role in behaviors associated with a sleep-like state induced by stress (SIS), acting in concert with the FARP (FMRFamide related) peptides, flp-13 and flp-24. The protein is Neuropeptide-like protein nlp-8 of Caenorhabditis elegans.